The primary structure comprises 169 residues: S-ribosylhomocysteine lyase (169 aa).

The Fe cation site is built by histidine 54, histidine 58, and cysteine 128.

It belongs to the LuxS family. In terms of assembly, homodimer. Fe cation is required as a cofactor.

The enzyme catalyses S-(5-deoxy-D-ribos-5-yl)-L-homocysteine = (S)-4,5-dihydroxypentane-2,3-dione + L-homocysteine. Functionally, involved in the synthesis of autoinducer 2 (AI-2) which is secreted by bacteria and is used to communicate both the cell density and the metabolic potential of the environment. The regulation of gene expression in response to changes in cell density is called quorum sensing. Catalyzes the transformation of S-ribosylhomocysteine (RHC) to homocysteine (HC) and 4,5-dihydroxy-2,3-pentadione (DPD). This is S-ribosylhomocysteine lyase from Shewanella piezotolerans (strain WP3 / JCM 13877).